The sequence spans 296 residues: UDP-N-acetylenolpyruvoylglucosamine reductase (296 aa).

Positions 26 to 191 (RIGGPANYFK…LSATFRLSKS (166 aa)) constitute an FAD-binding PCMH-type domain. Arginine 170 is a catalytic residue. The active-site Proton donor is the cysteine 218. The active site involves glutamate 287.

Belongs to the MurB family. The cofactor is FAD.

It localises to the cytoplasm. The enzyme catalyses UDP-N-acetyl-alpha-D-muramate + NADP(+) = UDP-N-acetyl-3-O-(1-carboxyvinyl)-alpha-D-glucosamine + NADPH + H(+). The protein operates within cell wall biogenesis; peptidoglycan biosynthesis. Its function is as follows. Cell wall formation. This Chlamydia felis (strain Fe/C-56) (Chlamydophila felis) protein is UDP-N-acetylenolpyruvoylglucosamine reductase.